We begin with the raw amino-acid sequence, 429 residues long: GTPase Obg (429 aa).

Residues 1-158 (MFYDTAKIYV…RWLLLELKLL (158 aa)) enclose the Obg domain. Positions 159 to 329 (ADVGLVGYPN…LIYRLWEIIS (171 aa)) constitute an OBG-type G domain. Residues 165–172 (GYPNAGKS), 190–194 (FTTLT), 212–215 (DIPG), 282–285 (NKMD), and 310–312 (SAL) each bind GTP. Mg(2+) contacts are provided by serine 172 and threonine 192. In terms of domain architecture, OCT spans 344–421 (IKEQPEEGFV…IGKFEFYFVD (78 aa)).

Belongs to the TRAFAC class OBG-HflX-like GTPase superfamily. OBG GTPase family. In terms of assembly, monomer. The cofactor is Mg(2+).

The protein resides in the cytoplasm. Its function is as follows. An essential GTPase which binds GTP, GDP and possibly (p)ppGpp with moderate affinity, with high nucleotide exchange rates and a fairly low GTP hydrolysis rate. Plays a role in control of the cell cycle, stress response, ribosome biogenesis and in those bacteria that undergo differentiation, in morphogenesis control. The polypeptide is GTPase Obg (Carboxydothermus hydrogenoformans (strain ATCC BAA-161 / DSM 6008 / Z-2901)).